A 506-amino-acid chain; its full sequence is Tabersonine 3-oxygenase (506 aa).

At methionine 1–glutamate 5 the chain is on the lumenal side. Residues serine 6–leucine 26 form a helical membrane-spanning segment. At arginine 27–alanine 506 the chain is on the cytoplasmic side. Cysteine 450 contacts heme.

This sequence belongs to the cytochrome P450 family. It depends on heme as a cofactor. Expressed in leaf epidermis.

The protein localises to the endoplasmic reticulum membrane. It catalyses the reaction 16-methoxytabersonine + reduced [NADPH--hemoprotein reductase] + O2 = (3R)-1,2-didehydro-3-hydroxy-16-methoxy-2,3-dihydrotabersonine + oxidized [NADPH--hemoprotein reductase] + H2O + H(+). The catalysed reaction is (-)-tabersonine + reduced [NADPH--hemoprotein reductase] + O2 = (3R)-1,2-didehydro-3-hydroxy-2,3-dihydrotabersonine + oxidized [NADPH--hemoprotein reductase] + H2O + H(+). It participates in alkaloid biosynthesis; vindoline biosynthesis. Its function is as follows. Cytochrome P450 catalyzing the monooxygenation of 16-methoxytabersonine, 16-hydroxytabersonine and tabersonine, but not of 2,3-dihydrotabersonine. Converts the C2,C3 alkene of tabersonine and 16-methoxytabersonine to the epoxides, which then spontaneously open to form the corresponding imine alcohols. Inactive in converting amyrin to ursolic acid. The sequence is that of Tabersonine 3-oxygenase from Catharanthus roseus (Madagascar periwinkle).